We begin with the raw amino-acid sequence, 339 residues long: Dihydroorotate dehydrogenase (quinone) (339 aa).

FMN contacts are provided by residues 64–68 and threonine 88; that span reads AGADK. Substrate is bound at residue lysine 68. Residue 113 to 117 participates in substrate binding; that stretch reads NRNGF. Residues asparagine 141 and asparagine 174 each contribute to the FMN site. Residue asparagine 174 participates in substrate binding. Serine 177 (nucleophile) is an active-site residue. Position 179 (asparagine 179) interacts with substrate. FMN-binding residues include lysine 219 and threonine 247. Substrate is bound at residue 248–249; that stretch reads NT. Residues glycine 270, glycine 299, and 320–321 each bind FMN; that span reads YS.

It belongs to the dihydroorotate dehydrogenase family. Type 2 subfamily. Monomer. FMN is required as a cofactor.

The protein resides in the cell membrane. The enzyme catalyses (S)-dihydroorotate + a quinone = orotate + a quinol. The protein operates within pyrimidine metabolism; UMP biosynthesis via de novo pathway; orotate from (S)-dihydroorotate (quinone route): step 1/1. Functionally, catalyzes the conversion of dihydroorotate to orotate with quinone as electron acceptor. This is Dihydroorotate dehydrogenase (quinone) (pyrD) from Haemophilus influenzae (strain ATCC 51907 / DSM 11121 / KW20 / Rd).